A 329-amino-acid polypeptide reads, in one-letter code: DNA repair protein RAD51 homolog 4 (329 aa).

Residues 1–83 form a preferentially binds ssDNA region; that stretch reads MGMLRAGLCP…ELKTSTAILS (83 aa). Positions 4–77 are interaction with XRCC2; sequence LRAGLCPGLT…GADLYEELKT (74 aa). Residues 77-328 are interaction with RAD51C; that stretch reads TSTAILSTGI…EQSPELPGKQ (252 aa). 107–114 is a binding site for ATP; sequence GGPGSGKT.

Belongs to the RecA family. RAD51 subfamily. As to quaternary structure, part of the BCDX2 complex consisting of RAD51B, RAD51C, RAD51D and XRCC2; the complex has a ring-like structure arranged into a flat disc around a central channel. In the absence of DNA, the BCDX2 subcomplex XRCC2:RAD51D formed a multimeric ring structure; in the presence of single-stranded DNA it formed a filamentous structure with the ssDNA. Interacts with SWSAP1 and ZSWIM7; involved in homologous recombination repair. Interacts with BLM; required for stimulation of BLM activity by the BCDX2 subcomplex XRCC2:RAD51D. In terms of tissue distribution, highly expressed in brain followed by testis. Also expressed in heart, liver, kidney, spleen, lung and skeletal muscle.

It is found in the nucleus. Its subcellular location is the chromosome. It localises to the telomere. Its function is as follows. Involved in the homologous recombination repair (HRR) pathway of double-stranded DNA breaks arising during DNA replication or induced by DNA-damaging agents. Bind to single-stranded DNA (ssDNA) and has DNA-dependent ATPase activity. Part of the RAD51 paralog protein complex BCDX2 which acts in the BRCA1-BRCA2-dependent HR pathway. Upon DNA damage, BCDX2 acts downstream of BRCA2 recruitment and upstream of RAD51 recruitment. BCDX2 binds predominantly to the intersection of the four duplex arms of the Holliday junction and to junction of replication forks. The BCDX2 complex was originally reported to bind single-stranded DNA, single-stranded gaps in duplex DNA and specifically to nicks in duplex DNA. Involved in telomere maintenance. The BCDX2 subcomplex XRCC2:RAD51D can stimulate Holliday junction resolution by BLM. In Mus musculus (Mouse), this protein is DNA repair protein RAD51 homolog 4 (Rad51d).